The following is a 141-amino-acid chain: Large ribosomal subunit protein uL11 (141 aa).

Belongs to the universal ribosomal protein uL11 family. In terms of assembly, part of the ribosomal stalk of the 50S ribosomal subunit. Interacts with L10 and the large rRNA to form the base of the stalk. L10 forms an elongated spine to which L12 dimers bind in a sequential fashion forming a multimeric L10(L12)X complex. Post-translationally, one or more lysine residues are methylated.

Forms part of the ribosomal stalk which helps the ribosome interact with GTP-bound translation factors. This Chlorobium chlorochromatii (strain CaD3) protein is Large ribosomal subunit protein uL11.